Here is a 390-residue protein sequence, read N- to C-terminus: Methylthioribose-1-phosphate isomerase (390 aa).

Residue Asp263 is the Proton donor of the active site.

Belongs to the eIF-2B alpha/beta/delta subunits family. MtnA subfamily.

The protein localises to the cytoplasm. Its subcellular location is the nucleus. It carries out the reaction 5-(methylsulfanyl)-alpha-D-ribose 1-phosphate = 5-(methylsulfanyl)-D-ribulose 1-phosphate. Its pathway is amino-acid biosynthesis; L-methionine biosynthesis via salvage pathway; L-methionine from S-methyl-5-thio-alpha-D-ribose 1-phosphate: step 1/6. In terms of biological role, catalyzes the interconversion of methylthioribose-1-phosphate (MTR-1-P) into methylthioribulose-1-phosphate (MTRu-1-P). The chain is Methylthioribose-1-phosphate isomerase from Meyerozyma guilliermondii (strain ATCC 6260 / CBS 566 / DSM 6381 / JCM 1539 / NBRC 10279 / NRRL Y-324) (Yeast).